The following is a 279-amino-acid chain: Ribosomal RNA small subunit methyltransferase A (279 aa).

S-adenosyl-L-methionine contacts are provided by histidine 12, leucine 14, glycine 39, glutamate 60, aspartate 81, and asparagine 118.

This sequence belongs to the class I-like SAM-binding methyltransferase superfamily. rRNA adenine N(6)-methyltransferase family. RsmA subfamily.

It localises to the cytoplasm. The enzyme catalyses adenosine(1518)/adenosine(1519) in 16S rRNA + 4 S-adenosyl-L-methionine = N(6)-dimethyladenosine(1518)/N(6)-dimethyladenosine(1519) in 16S rRNA + 4 S-adenosyl-L-homocysteine + 4 H(+). Functionally, specifically dimethylates two adjacent adenosines (A1518 and A1519) in the loop of a conserved hairpin near the 3'-end of 16S rRNA in the 30S particle. May play a critical role in biogenesis of 30S subunits. This chain is Ribosomal RNA small subunit methyltransferase A, found in Polaromonas naphthalenivorans (strain CJ2).